The primary structure comprises 113 residues: RING-box protein 2 (113 aa).

A disordered region spans residues 1–26 (MADVEDGEEPCVLSSHSGSAGSKSGG). The residue at position 2 (Ala2) is an N-acetylalanine. Zn(2+) contacts are provided by Cys50, Cys53, Cys61, Cys64, Cys73, Cys80, His82, His85, Cys87, Cys88, Cys99, and Cys102. The segment at 61-103 (CLRCQAENKQEDCVVVWGECNHSFHNCCMSLWVKQNNRCPLCQ) adopts an RING-type zinc-finger fold.

It belongs to the RING-box family. As to quaternary structure, catalytic component of multiple cullin-5-RING E3 ubiquitin-protein ligase complexes (ECS complexes, also named CRL5 complexes) composed of CUL5, Elongin BC (ELOB and ELOC), RNF7/RBX2 and a variable SOCS box domain-containing protein as substrate-specific recognition component. Also interacts (with lower preference) with CUL1, CUL2, CUL3, CUL4A and CUL4B; additional evidence is however required to confirm this result in vivo. Interacts with UBE2F. Interacts with CSNK2B, the interaction is not affected by phosphorylation by CK2. May also interact with DCUN1D1, DCUN1D2, DCUN1D3, DCUN1D4 and DCUN1D5.

The protein resides in the cytoplasm. It localises to the nucleus. The catalysed reaction is S-ubiquitinyl-[E2 ubiquitin-conjugating enzyme]-L-cysteine + [acceptor protein]-L-lysine = [E2 ubiquitin-conjugating enzyme]-L-cysteine + N(6)-ubiquitinyl-[acceptor protein]-L-lysine.. It catalyses the reaction S-[NEDD8-protein]-yl-[E2 NEDD8-conjugating enzyme]-L-cysteine + [cullin]-L-lysine = [E2 NEDD8-conjugating enzyme]-L-cysteine + N(6)-[NEDD8-protein]-yl-[cullin]-L-lysine.. It functions in the pathway protein modification; protein ubiquitination. It participates in protein modification; protein neddylation. Functionally, catalytic component of multiple cullin-5-RING E3 ubiquitin-protein ligase complexes (ECS complexes), which mediate the ubiquitination and subsequent proteasomal degradation of target proteins. It is thereby involved in various biological processes, such as cell cycle progression, signal transduction and transcription. The functional specificity of the E3 ubiquitin-protein ligase ECS complexes depend on the variable SOCS box-containing substrate recognition component. Within ECS complexes, RNF7/RBX2 recruits the E2 ubiquitination enzyme to the complex via its RING-type and brings it into close proximity to the substrate. Catalytic subunit of various SOCS-containing ECS complexes, such as the ECS(SOCS7) complex, that regulate reelin signaling by mediating ubiquitination and degradation of DAB1. The ECS(SOCS2) complex mediates the ubiquitination and subsequent proteasomal degradation of phosphorylated EPOR and GHR. Promotes ubiquitination and degradation of NF1, thereby regulating Ras protein signal transduction. As part of the ECS(ASB9) complex, catalyzes ubiquitination and degradation of CKB. The ECS(SPSB3) complex catalyzes ubiquitination of nuclear CGAS. As part of the ECS(RAB40C) complex, mediates ANKRD28 ubiquitination and degradation, thereby inhibiting protein phosphatase 6 (PP6) complex activity and focal adhesion assembly during cell migration. As part of some ECS complex, catalyzes 'Lys-11'-linked ubiquitination and degradation of BTRC. ECS complexes and ARIH2 collaborate in tandem to mediate ubiquitination of target proteins; ARIH2 mediating addition of the first ubiquitin on CRLs targets. Specifically catalyzes the neddylation of CUL5 via its interaction with UBE2F. Does not catalyze neddylation of other cullins (CUL1, CUL2, CUL3, CUL4A or CUL4B). May play a role in protecting cells from apoptosis induced by redox agents. This is RING-box protein 2 from Mus musculus (Mouse).